Reading from the N-terminus, the 142-residue chain is Large ribosomal subunit protein uL11 (142 aa).

This sequence belongs to the universal ribosomal protein uL11 family. Part of the ribosomal stalk of the 50S ribosomal subunit. Interacts with L10 and the large rRNA to form the base of the stalk. L10 forms an elongated spine to which L12 dimers bind in a sequential fashion forming a multimeric L10(L12)X complex. Post-translationally, one or more lysine residues are methylated.

In terms of biological role, forms part of the ribosomal stalk which helps the ribosome interact with GTP-bound translation factors. In Mycolicibacterium vanbaalenii (strain DSM 7251 / JCM 13017 / BCRC 16820 / KCTC 9966 / NRRL B-24157 / PYR-1) (Mycobacterium vanbaalenii), this protein is Large ribosomal subunit protein uL11.